A 485-amino-acid polypeptide reads, in one-letter code: UDP-N-acetylmuramate--L-alanine ligase (485 aa).

Residue 112–118 (GTHGKTT) participates in ATP binding.

This sequence belongs to the MurCDEF family.

It localises to the cytoplasm. It carries out the reaction UDP-N-acetyl-alpha-D-muramate + L-alanine + ATP = UDP-N-acetyl-alpha-D-muramoyl-L-alanine + ADP + phosphate + H(+). The protein operates within cell wall biogenesis; peptidoglycan biosynthesis. Functionally, cell wall formation. This is UDP-N-acetylmuramate--L-alanine ligase from Variovorax paradoxus (strain S110).